Consider the following 475-residue polypeptide: Aspartyl/glutamyl-tRNA(Asn/Gln) amidotransferase subunit B (475 aa).

This sequence belongs to the GatB/GatE family. GatB subfamily. Heterotrimer of A, B and C subunits.

It carries out the reaction L-glutamyl-tRNA(Gln) + L-glutamine + ATP + H2O = L-glutaminyl-tRNA(Gln) + L-glutamate + ADP + phosphate + H(+). The enzyme catalyses L-aspartyl-tRNA(Asn) + L-glutamine + ATP + H2O = L-asparaginyl-tRNA(Asn) + L-glutamate + ADP + phosphate + 2 H(+). Its function is as follows. Allows the formation of correctly charged Asn-tRNA(Asn) or Gln-tRNA(Gln) through the transamidation of misacylated Asp-tRNA(Asn) or Glu-tRNA(Gln) in organisms which lack either or both of asparaginyl-tRNA or glutaminyl-tRNA synthetases. The reaction takes place in the presence of glutamine and ATP through an activated phospho-Asp-tRNA(Asn) or phospho-Glu-tRNA(Gln). The sequence is that of Aspartyl/glutamyl-tRNA(Asn/Gln) amidotransferase subunit B from Lysinibacillus sphaericus (strain C3-41).